A 119-amino-acid chain; its full sequence is uncharacterized protein (119 aa).

Positions 6 to 36 form a coiled coil; that stretch reads QAYLDIQGKIAEFRREIKALRVEEKAITANL. Residues 95 to 119 form a disordered region; it reads AVTGSSSNVKIRKSAPARNEEDDDG.

This is an uncharacterized protein from Frog virus 3 (isolate Goorha) (FV-3).